The chain runs to 104 residues: Thioredoxin-3 (104 aa).

Residues 2-104 (SKVIHVTSNE…TLRSTLEANI (103 aa)) form the Thioredoxin domain. Active-site nucleophile residues include cysteine 31 and cysteine 34. Cysteine 31 and cysteine 34 are disulfide-bonded.

This sequence belongs to the thioredoxin family.

Its function is as follows. Participates in various redox reactions through the reversible oxidation of its active center dithiol to a disulfide and catalyzes dithiol-disulfide exchange reactions. This is Thioredoxin-3 (trxC) from Dictyostelium discoideum (Social amoeba).